The sequence spans 201 residues: Dephospho-CoA kinase (201 aa).

Residues 3-201 (ILGLTGGIGS…QIDSRVGCKI (199 aa)) enclose the DPCK domain. An ATP-binding site is contributed by 11–16 (GSGKSL).

This sequence belongs to the CoaE family.

It localises to the cytoplasm. The enzyme catalyses 3'-dephospho-CoA + ATP = ADP + CoA + H(+). The protein operates within cofactor biosynthesis; coenzyme A biosynthesis; CoA from (R)-pantothenate: step 5/5. Its function is as follows. Catalyzes the phosphorylation of the 3'-hydroxyl group of dephosphocoenzyme A to form coenzyme A. This is Dephospho-CoA kinase from Ehrlichia ruminantium (strain Welgevonden).